Here is a 332-residue protein sequence, read N- to C-terminus: NADH-quinone oxidoreductase subunit H (332 aa).

The next 9 helical transmembrane spans lie at 4-24 (FAFF…IFAS), 44-64 (IGPD…MIKL), 78-98 (FIFA…LAAI), 120-140 (VALL…FLGG), 165-185 (VGAL…LVDI), 194-214 (FSWL…ALFI), 255-275 (IAGA…FWII), 279-299 (IMMI…RAAF), and 312-332 (YLIL…AVLL).

Belongs to the complex I subunit 1 family. In terms of assembly, NDH-1 is composed of 14 different subunits. Subunits NuoA, H, J, K, L, M, N constitute the membrane sector of the complex.

The protein localises to the cell inner membrane. The enzyme catalyses a quinone + NADH + 5 H(+)(in) = a quinol + NAD(+) + 4 H(+)(out). In terms of biological role, NDH-1 shuttles electrons from NADH, via FMN and iron-sulfur (Fe-S) centers, to quinones in the respiratory chain. The immediate electron acceptor for the enzyme in this species is believed to be ubiquinone. Couples the redox reaction to proton translocation (for every two electrons transferred, four hydrogen ions are translocated across the cytoplasmic membrane), and thus conserves the redox energy in a proton gradient. This subunit may bind ubiquinone. This chain is NADH-quinone oxidoreductase subunit H, found in Campylobacter jejuni subsp. doylei (strain ATCC BAA-1458 / RM4099 / 269.97).